We begin with the raw amino-acid sequence, 804 residues long: Phenylalanine--tRNA ligase beta subunit (804 aa).

The 117-residue stretch at glutamate 39–tyrosine 155 folds into the tRNA-binding domain. In terms of domain architecture, B5 spans arginine 408–serine 483. The Mg(2+) site is built by aspartate 461, aspartate 467, glutamate 470, and glutamate 471. Positions proline 711–arginine 804 constitute an FDX-ACB domain.

It belongs to the phenylalanyl-tRNA synthetase beta subunit family. Type 1 subfamily. In terms of assembly, tetramer of two alpha and two beta subunits. Mg(2+) is required as a cofactor.

It localises to the cytoplasm. It catalyses the reaction tRNA(Phe) + L-phenylalanine + ATP = L-phenylalanyl-tRNA(Phe) + AMP + diphosphate + H(+). This chain is Phenylalanine--tRNA ligase beta subunit, found in Lactobacillus acidophilus (strain ATCC 700396 / NCK56 / N2 / NCFM).